Reading from the N-terminus, the 494-residue chain is Aldehyde dehydrogenase (494 aa).

223 to 228 (GSTTAG) serves as a coordination point for NAD(+). Active-site residues include glutamate 245 and cysteine 279.

It belongs to the aldehyde dehydrogenase family.

It catalyses the reaction an aldehyde + NAD(+) + H2O = a carboxylate + NADH + 2 H(+). The protein operates within mycotoxin biosynthesis. Functionally, aldehyde dehydrogenase; part of the gene cluster that mediates the biosynthesis of the selective antifungal agent ascochitine, an o-quinone methide that plays a possible protective role against other microbial competitors in nature and is considered to be important for pathogenicity of legume-associated Didymella species. The pathway probably begins with the synthesis of a keto-aldehyde intermediate by the ascochitine non-reducing polyketide synthase pksAC from successive condensations of 4 malonyl-CoA units, presumably with a simple acetyl-CoA starter unit. Release of the keto-aldehyde intermediate is consistent with the presence of the C-terminal reductive release domain. The HR-PKS (orf7) probably makes a diketide starter unit which is passed to the non-reducing polyketide synthase pksAC for further extension, producing ascochital and ascochitine. The aldehyde dehydrogenase (orf1), the 2-oxoglutarate-dependent dioxygenase (orf3) and the dehydrogenase (orf9) are probably involved in subsequent oxidations of methyl groups to the carboxylic acid of the heterocyclic ring. The ascochitine gene cluster also includes a gene encoding a short peptide with a cupin domain (orf2) that is often found in secondary metabolite gene clusters and which function has still to be determined. This chain is Aldehyde dehydrogenase, found in Didymella fabae (Leaf and pod spot disease fungus).